The sequence spans 747 residues: Photosystem I P700 chlorophyll a apoprotein A2 (747 aa).

8 helical membrane passes run 46-69, 135-158, 175-199, 273-291, 341-364, 380-406, 428-450, and 530-548; these read LFAT…FHIA, LFQG…LHLQ, LNHH…HVAI, IAHH…GHMY, LHFQ…QHMG, SALY…IFFV, ALIS…IYVH, and FLVH…LILI. 2 residues coordinate [4Fe-4S] cluster: Cys572 and Cys581. 2 consecutive transmembrane segments (helical) span residues 588–609 and 656–678; these read ATYL…YWHW and LSPW…MFLI. Divinyl chlorophyll a is bound by residues His667, Met675, and Tyr683. Trp684 lines the phylloquinone pocket. Residues 720–740 traverse the membrane as a helical segment; that stretch reads LVGLTHFTVGNFVTFGAFVIA.

Belongs to the PsaA/PsaB family. As to quaternary structure, the PsaA/B heterodimer binds the P700 divinyl chlorophyll special pair and subsequent electron acceptors. PSI consists of a core antenna complex that captures photons, and an electron transfer chain that converts photonic excitation into a charge separation. The cyanobacterial PSI reaction center is composed of one copy each of PsaA,B,C,D,E,F,I,J,K,L,M and X, and forms trimeric complexes. Requires PSI electron transfer chain: 5 divinyl chlorophyll a, 1 divinyl chlorophyll a', 2 phylloquinones and 3 4Fe-4S clusters. PSI core antenna: 90 divinyl chlorophyll a, 22 carotenoids, 3 phospholipids and 1 galactolipid. P700 is a divinyl chlorophyll a/divinyl chlorophyll a' dimer, A0 is one or more divinyl chlorophyll a, A1 is one or both phylloquinones and FX is a shared 4Fe-4S iron-sulfur center. as cofactor.

It is found in the cellular thylakoid membrane. It catalyses the reaction reduced [plastocyanin] + hnu + oxidized [2Fe-2S]-[ferredoxin] = oxidized [plastocyanin] + reduced [2Fe-2S]-[ferredoxin]. PsaA and PsaB bind P700, the primary electron donor of photosystem I (PSI), as well as the electron acceptors A0, A1 and FX. PSI is a plastocyanin/cytochrome c6-ferredoxin oxidoreductase, converting photonic excitation into a charge separation, which transfers an electron from the donor P700 chlorophyll pair to the spectroscopically characterized acceptors A0, A1, FX, FA and FB in turn. Oxidized P700 is reduced on the lumenal side of the thylakoid membrane by plastocyanin or cytochrome c6. The sequence is that of Photosystem I P700 chlorophyll a apoprotein A2 from Prochlorococcus marinus (strain SARG / CCMP1375 / SS120).